Reading from the N-terminus, the 246-residue chain is Submandibular gland secretory Glx-rich protein CA (246 aa).

Residues M1 to G18 form the signal peptide. The interval S14 to P223 is disordered. 7 stretches are compositionally biased toward low complexity: residues P39–D50, E58–A71, Q81–P93, Q104–P116, Q127–T141, Q150–Q159, and V178–N196. Tandem repeats lie at residues E67–N89, Q90–N112, Q113–D135, Q136–N158, and Q159–P181. A 5 X 23 AA tandem repeats region spans residues E67 to P181. Over residues P197–R216 the composition is skewed to basic and acidic residues.

Submandibular gland acinar cells.

Its subcellular location is the secreted. Its function is as follows. GRP proteins have a marked affinity for hydroxyapatite. They may play a role in the formation of the protective acquired pellicle at the saliva-tooth interface. The polypeptide is Submandibular gland secretory Glx-rich protein CA (Grpca) (Rattus norvegicus (Rat)).